Consider the following 557-residue polypeptide: ADP-ribosylation factor-binding protein GGA1 (557 aa).

The 137-residue stretch at 29–165 (ACRSTLPEPD…LLKYKGYTFP (137 aa)) folds into the VHS domain. The GAT domain occupies 192-317 (ERAQAAKLEE…LLKRYKSIKG (126 aa)). A Phosphothreonine modification is found at Thr-348. Phosphoserine occurs at positions 353, 357, 378, and 394. The region spanning 440 to 556 (AQSQRHILNQ…EESGTTSLPT (117 aa)) is the GAE domain.

Binds to ARF1 and ARF2.

It is found in the golgi apparatus. The protein resides in the trans-Golgi network. In terms of biological role, may play a role in the regulation of membrane traffic through the trans-Golgi network. This Saccharomyces cerevisiae (strain ATCC 204508 / S288c) (Baker's yeast) protein is ADP-ribosylation factor-binding protein GGA1 (GGA1).